A 356-amino-acid chain; its full sequence is Replication factor C subunit 3 (356 aa).

Lys20 is subject to N6-acetyllysine. Residue Ser125 is modified to Phosphoserine.

It belongs to the activator 1 small subunits family. Subunit of the RFC complex, an heteropentameric complex consisting of a large subunit RFC1 and four small subunits RFC2, RFC3, RFC4 and RFC5; the RFC complex interacts with PCNA. Forms an heterotetrameric complex with RFC2, RFC4 and RFC5; this complex has ATPase activity but is not stimulated by PCNA. The heterotetramer of subunits RFC2, RFC3, RFC4 and RFC5 interacts with RAD17. Interacts with CNTD1; this interaction facilitates crossover formation.

It localises to the nucleus. Functionally, subunit of the replication factor C (RFC) complex which acts during elongation of primed DNA templates by DNA polymerases delta and epsilon, and is necessary for ATP-dependent loading of proliferating cell nuclear antigen (PCNA) onto primed DNA. The sequence is that of Replication factor C subunit 3 (RFC3) from Bos taurus (Bovine).